Here is an 89-residue protein sequence, read N- to C-terminus: Phosphocarrier protein HPr (89 aa).

Residues 1–88 (MLEHELIVTN…ELFENRFNED (88 aa)) enclose the HPr domain. His-15 (pros-phosphohistidine intermediate) is an active-site residue. A Phosphoserine; by HPrK/P modification is found at Ser-46.

Belongs to the HPr family.

It localises to the cytoplasm. Its activity is regulated as follows. Phosphorylation on Ser-46 inhibits the phosphoryl transfer from enzyme I to HPr. Functionally, general (non sugar-specific) component of the phosphoenolpyruvate-dependent sugar phosphotransferase system (sugar PTS). This major carbohydrate active-transport system catalyzes the phosphorylation of incoming sugar substrates concomitantly with their translocation across the cell membrane. The phosphoryl group from phosphoenolpyruvate (PEP) is transferred to the phosphoryl carrier protein HPr by enzyme I. Phospho-HPr then transfers it to the PTS EIIA domain. This chain is Phosphocarrier protein HPr (ptsH), found in Xylella fastidiosa (strain 9a5c).